A 185-amino-acid polypeptide reads, in one-letter code: MAEERRRDDGGDVEVELSLRLRTGDDSTSADPAPATVAAEARRNLTIFYNGRMCAVNVTELQARTIISMASQGNFGKQQQQQIQGRDDHHYHQGESSSGGGVSTAAARHCDVAGSSSSHSGSGSGSATPPRPALVSPRAGLQAAAAAAPTMNQPPAASGLSMKRSLQRFLEKRKTRAAAPLYARR.

One can recognise a Tify domain in the interval 38 to 72 (AAEARRNLTIFYNGRMCAVNVTELQARTIISMASQ). Residues 77–185 (KQQQQQIQGR…RAAAPLYARR (109 aa)) are disordered. Over residues 137-157 (PRAGLQAAAAAAPTMNQPPAA) the composition is skewed to low complexity. Positions 155-182 (PAASGLSMKRSLQRFLEKRKTRAAAPLY) match the Jas motif. The short motif at 162-169 (MKRSLQRF) is the Nuclear localization signal element.

Belongs to the TIFY/JAZ family. In terms of processing, ubiquitinated. Targeted for degradation by the SCF(COI1) E3 ubiquitin ligase-proteasome pathway during jasmonate signaling.

It localises to the nucleus. Functionally, repressor of jasmonate responses. The sequence is that of Protein TIFY 5 from Oryza sativa subsp. indica (Rice).